A 392-amino-acid chain; its full sequence is Bifunctional enzyme Fae/Hps (392 aa).

The tract at residues 1 to 161 (MFQIGEALMG…EESNKSTHAI (161 aa)) is formaldehyde-activating enzyme. The active-site Proton donor is the His-17. 5 residues coordinate substrate: Asp-19, Leu-48, Lys-66, Thr-68, and Gln-83. Residues 162–392 (MGFKVTRLWD…IDQFRVMTDF (231 aa)) are 3-hexulose-6-phosphate synthase.

This sequence in the N-terminal section; belongs to the formaldehyde-activating enzyme family. In the C-terminal section; belongs to the HPS/KGPDC family. HPS subfamily.

It carries out the reaction 5,6,7,8-tetrahydromethanopterin + formaldehyde = 5,10-methylenetetrahydromethanopterin + H2O. The catalysed reaction is D-ribulose 5-phosphate + formaldehyde = D-arabino-hex-3-ulose 6-phosphate. It functions in the pathway carbohydrate biosynthesis; D-ribose 5-phosphate biosynthesis. Functionally, catalyzes the condensation of formaldehyde with tetrahydromethanopterin (H(4)MPT) to 5,10-methylenetetrahydromethanopterin. Catalyzes the reversible formation of ribulose-5-phosphate and formaldehyde from 3-hexulose-6-phosphate. The polypeptide is Bifunctional enzyme Fae/Hps (Methanosarcina barkeri (strain Fusaro / DSM 804)).